A 103-amino-acid polypeptide reads, in one-letter code: Small ubiquitin-related modifier 3 (103 aa).

Glycyl lysine isopeptide (Lys-Gly) (interchain with G-Cter in SUMO2) cross-links involve residues K5 and K7. K11 participates in a covalent cross-link: Glycyl lysine isopeptide (Lys-Gly) (interchain with G-Cter in SUMO); alternate. K11 participates in a covalent cross-link: Glycyl lysine isopeptide (Lys-Gly) (interchain with G-Cter in SUMO2); alternate. One can recognise a Ubiquitin-like domain in the interval D15–G92. A Glycyl lysine isopeptide (Gly-Lys) (interchain with K-? in acceptor proteins) cross-link involves residue G92. A propeptide spanning residues V93–F103 is cleaved from the precursor.

The protein belongs to the ubiquitin family. SUMO subfamily. In terms of assembly, covalently attached to a number of proteins. Interacts with BMAL1. Interacts with USP25 (via ts SIM domain); the interaction sumoylates USP25 and inhibits its ubiquitin hydrolyzing activity. Interacts with SAE2 and UBE2I. In terms of processing, polymeric chains can be formed through Lys-11 cross-linking. Cleavage of precursor form by SENP1, SENP2 or SENP5 is necessary for function. As to expression, expressed predominantly in liver.

It is found in the cytoplasm. The protein localises to the nucleus. The protein resides in the PML body. In terms of biological role, ubiquitin-like protein which can be covalently attached to target lysines either as a monomer or as a lysine-linked polymer. Does not seem to be involved in protein degradation and may function as an antagonist of ubiquitin in the degradation process. Plays a role in a number of cellular processes such as nuclear transport, DNA replication and repair, mitosis and signal transduction. Covalent attachment to its substrates requires prior activation by the E1 complex SAE1-SAE2 and linkage to the E2 enzyme UBE2I, and can be promoted by an E3 ligase such as PIAS1-4, RANBP2 or CBX4. Plays a role in the regulation of sumoylation status of SETX. The protein is Small ubiquitin-related modifier 3 of Homo sapiens (Human).